The primary structure comprises 1303 residues: Alpha,alpha-trehalose-phosphate synthase [UDP-forming] 2 (1303 aa).

2 disordered regions span residues Met1–Thr48 and Leu205–Lys251. Low complexity predominate over residues Ser212–Ser221.

In the N-terminal section; belongs to the glycosyltransferase 20 family. The protein in the C-terminal section; belongs to the gob-1 trehalose phosphatase family.

The enzyme catalyses D-glucose 6-phosphate + UDP-alpha-D-glucose = alpha,alpha-trehalose 6-phosphate + UDP + H(+). Functionally, catalyzes the production of trehalose from glucose-6-phosphate and UDP-alpha-D-glucose in a 2 step process. This chain is Alpha,alpha-trehalose-phosphate synthase [UDP-forming] 2 (tps-2), found in Aphelenchoides avenae (Mycophagous nematode worm).